Here is a 185-residue protein sequence, read N- to C-terminus: Small ribosomal subunit protein uS4 (185 aa).

The S4 RNA-binding domain maps to 108 to 170 (RRLQTLVYRK…GKSPFVDASH (63 aa)).

The protein belongs to the universal ribosomal protein uS4 family. In terms of assembly, part of the 30S ribosomal subunit. Contacts protein S5. The interaction surface between S4 and S5 is involved in control of translational fidelity.

In terms of biological role, one of the primary rRNA binding proteins, it binds directly to 16S rRNA where it nucleates assembly of the body of the 30S subunit. Functionally, with S5 and S12 plays an important role in translational accuracy. The polypeptide is Small ribosomal subunit protein uS4 (Methanoregula boonei (strain DSM 21154 / JCM 14090 / 6A8)).